The following is a 288-amino-acid chain: Probable branched-chain-amino-acid aminotransferase (288 aa).

Position 153 is an N6-(pyridoxal phosphate)lysine (lysine 153).

The protein belongs to the class-IV pyridoxal-phosphate-dependent aminotransferase family. Requires pyridoxal 5'-phosphate as cofactor.

It catalyses the reaction L-leucine + 2-oxoglutarate = 4-methyl-2-oxopentanoate + L-glutamate. The catalysed reaction is L-isoleucine + 2-oxoglutarate = (S)-3-methyl-2-oxopentanoate + L-glutamate. It carries out the reaction L-valine + 2-oxoglutarate = 3-methyl-2-oxobutanoate + L-glutamate. It participates in amino-acid biosynthesis; L-isoleucine biosynthesis; L-isoleucine from 2-oxobutanoate: step 4/4. The protein operates within amino-acid biosynthesis; L-leucine biosynthesis; L-leucine from 3-methyl-2-oxobutanoate: step 4/4. Its pathway is amino-acid biosynthesis; L-valine biosynthesis; L-valine from pyruvate: step 4/4. In terms of biological role, acts on leucine, isoleucine and valine. This is Probable branched-chain-amino-acid aminotransferase (ilvE) from Rickettsia typhi (strain ATCC VR-144 / Wilmington).